We begin with the raw amino-acid sequence, 536 residues long: Chaperonin GroEL 2 (536 aa).

ATP contacts are provided by residues 29 to 32, Lys50, Gly416, and Asp497; that span reads TLGP.

The protein belongs to the chaperonin (HSP60) family. Forms a cylinder of 14 subunits composed of two heptameric rings stacked back-to-back. Interacts with the co-chaperonin GroES.

The protein localises to the cytoplasm. The catalysed reaction is ATP + H2O + a folded polypeptide = ADP + phosphate + an unfolded polypeptide.. Together with its co-chaperonin GroES, plays an essential role in assisting protein folding. The GroEL-GroES system forms a nano-cage that allows encapsulation of the non-native substrate proteins and provides a physical environment optimized to promote and accelerate protein folding. This is Chaperonin GroEL 2 from Chlamydia caviae (strain ATCC VR-813 / DSM 19441 / 03DC25 / GPIC) (Chlamydophila caviae).